The primary structure comprises 528 residues: DNA damage-binding protein cmr1 (528 aa).

Disordered regions lie at residues alanine 32–alanine 98 and aspartate 217–proline 243. Residues lysine 52–valine 62 show a composition bias toward basic residues. The WD 1 repeat unit spans residues leucine 185–alanine 226. Acidic residues predominate over residues glutamate 230–aspartate 242. WD repeat units follow at residues proline 250–lysine 290, serine 297–valine 337, leucine 342–proline 382, valine 389–glutamate 428, glycine 451–leucine 494, and aspartate 497–methionine 528.

Belongs to the WD repeat DDB2/WDR76 family.

Its function is as follows. DNA-binding protein that binds to both single- and double-stranded DNA. Binds preferentially to UV-damaged DNA. May be involved in DNA-metabolic processes. The chain is DNA damage-binding protein cmr1 from Aspergillus fumigatus (strain CBS 144.89 / FGSC A1163 / CEA10) (Neosartorya fumigata).